The sequence spans 1487 residues: Chromosome partition protein MukB (1487 aa).

34–41 provides a ligand contact to ATP; that stretch reads GGNGAGKS. 5 coiled-coil regions span residues 297–426, 460–666, 781–806, 836–1111, and 1210–1266; these read SSRE…LEKA, ALKH…RLAS, RAAR…AKAA, EQAL…RTFV, and VEAI…LSNI. The interval 667 to 784 is flexible hinge; sequence PGGSNDPRLK…VIPLFGRAAR (118 aa).

It belongs to the SMC family. MukB subfamily. In terms of assembly, homodimerization via its hinge domain. Binds to DNA via its C-terminal region. Interacts, and probably forms a ternary complex, with MukE and MukF via its C-terminal region. The complex formation is stimulated by calcium or magnesium. Interacts with tubulin-related protein FtsZ.

It is found in the cytoplasm. It localises to the nucleoid. In terms of biological role, plays a central role in chromosome condensation, segregation and cell cycle progression. Functions as a homodimer, which is essential for chromosome partition. Involved in negative DNA supercoiling in vivo, and by this means organize and compact chromosomes. May achieve or facilitate chromosome segregation by condensation DNA from both sides of a centrally located replisome during cell division. This Vibrio vulnificus (strain YJ016) protein is Chromosome partition protein MukB.